We begin with the raw amino-acid sequence, 473 residues long: Putative BTB/POZ domain-containing protein R765 (473 aa).

Residues 2–72 (TNIQLVIKDD…KIYDREITAD (71 aa)) enclose the BTB domain.

The protein belongs to the mimivirus BTB/WD family.

This Acanthamoeba polyphaga mimivirus (APMV) protein is Putative BTB/POZ domain-containing protein R765.